Consider the following 460-residue polypeptide: Tol-Pal system protein TolB (460 aa).

Residues 1 to 22 (MTIFQKSFILLIIWNFSLFAFS) form the signal peptide.

It belongs to the TolB family. The Tol-Pal system is composed of five core proteins: the inner membrane proteins TolA, TolQ and TolR, the periplasmic protein TolB and the outer membrane protein Pal. They form a network linking the inner and outer membranes and the peptidoglycan layer.

The protein resides in the periplasm. Part of the Tol-Pal system, which plays a role in outer membrane invagination during cell division and is important for maintaining outer membrane integrity. TolB occupies a key intermediary position in the Tol-Pal system because it communicates directly with both membrane-embedded components, Pal in the outer membrane and TolA in the inner membrane. The chain is Tol-Pal system protein TolB from Blochmanniella floridana.